The following is a 72-amino-acid chain: MAKEETIQMQGEVIETLPNATFRIKLENGHIVLGHISGKMRMNYIRILPGDKVTVDLTPYDLTRARITFRTK.

An S1-like domain is found at 1–72; sequence MAKEETIQMQ…TRARITFRTK (72 aa).

This sequence belongs to the IF-1 family. As to quaternary structure, component of the 30S ribosomal translation pre-initiation complex which assembles on the 30S ribosome in the order IF-2 and IF-3, IF-1 and N-formylmethionyl-tRNA(fMet); mRNA recruitment can occur at any time during PIC assembly.

It is found in the cytoplasm. One of the essential components for the initiation of protein synthesis. Stabilizes the binding of IF-2 and IF-3 on the 30S subunit to which N-formylmethionyl-tRNA(fMet) subsequently binds. Helps modulate mRNA selection, yielding the 30S pre-initiation complex (PIC). Upon addition of the 50S ribosomal subunit IF-1, IF-2 and IF-3 are released leaving the mature 70S translation initiation complex. The sequence is that of Translation initiation factor IF-1 from Nitrosomonas eutropha (strain DSM 101675 / C91 / Nm57).